The chain runs to 273 residues: 2,3,4,5-tetrahydropyridine-2,6-dicarboxylate N-succinyltransferase (273 aa).

Residues arginine 104 and aspartate 141 each coordinate substrate.

This sequence belongs to the transferase hexapeptide repeat family. As to quaternary structure, homotrimer.

The protein localises to the cytoplasm. The catalysed reaction is (S)-2,3,4,5-tetrahydrodipicolinate + succinyl-CoA + H2O = (S)-2-succinylamino-6-oxoheptanedioate + CoA. The protein operates within amino-acid biosynthesis; L-lysine biosynthesis via DAP pathway; LL-2,6-diaminopimelate from (S)-tetrahydrodipicolinate (succinylase route): step 1/3. This Psychrobacter arcticus (strain DSM 17307 / VKM B-2377 / 273-4) protein is 2,3,4,5-tetrahydropyridine-2,6-dicarboxylate N-succinyltransferase.